Consider the following 117-residue polypeptide: Class I hydrophobin 2 (117 aa).

Positions 1–21 are cleaved as a signal peptide; that stretch reads EIVSLSLSLLAVVPLVVLVIA. Cystine bridges form between Cys-35–Cys-96, Cys-42–Cys-90, Cys-43–Cys-76, and Cys-97–Cys-110.

It belongs to the fungal hydrophobin family. In terms of assembly, self-assembles to form functional amyloid fibrils called rodlets. Self-assembly into fibrillar rodlets occurs spontaneously at hydrophobic:hydrophilic interfaces and the rodlets further associate laterally to form amphipathic monolayers.

It localises to the secreted. The protein localises to the cell wall. Its function is as follows. Aerial growth, conidiation, and dispersal of filamentous fungi in the environment rely upon a capability of their secreting small amphipathic proteins called hydrophobins (HPBs) with low sequence identity. Class I can self-assemble into an outermost layer of rodlet bundles on aerial cell surfaces, conferring cellular hydrophobicity that supports fungal growth, development and dispersal; whereas Class II form highly ordered films at water-air interfaces through intermolecular interactions but contribute nothing to the rodlet structure. The protein is Class I hydrophobin 2 of Pisolithus tinctorius (Dead man's foot).